A 348-amino-acid polypeptide reads, in one-letter code: Isopentenyl-diphosphate delta-isomerase (348 aa).

5-6 (RK) contributes to the substrate binding site. FMN-binding positions include Ser61, 62–64 (SMT), Ser92, and Asn120. 92-94 (SMR) is a substrate binding site. A substrate-binding site is contributed by Gln159. Glu160 is a Mg(2+) binding site. Residues Lys189, Ser214, Thr219, 269-271 (GLR), and 290-291 (AR) contribute to the FMN site.

This sequence belongs to the IPP isomerase type 2 family. As to quaternary structure, homooctamer. Dimer of tetramers. The cofactor is FMN. Requires NADPH as cofactor. Mg(2+) serves as cofactor.

Its subcellular location is the cytoplasm. The catalysed reaction is isopentenyl diphosphate = dimethylallyl diphosphate. Its function is as follows. Involved in the biosynthesis of isoprenoids. Catalyzes the 1,3-allylic rearrangement of the homoallylic substrate isopentenyl (IPP) to its allylic isomer, dimethylallyl diphosphate (DMAPP). The protein is Isopentenyl-diphosphate delta-isomerase of Thermoplasma acidophilum (strain ATCC 25905 / DSM 1728 / JCM 9062 / NBRC 15155 / AMRC-C165).